The primary structure comprises 817 residues: DNA ligase (817 aa).

NAD(+)-binding positions include 45 to 49 (DVEYD), 94 to 95 (SI), and E131. Residue K133 is the N6-AMP-lysine intermediate of the active site. NAD(+)-binding residues include R154, E193, K311, and K335. Positions 444, 447, 462, and 468 each coordinate Zn(2+). One can recognise a BRCT domain in the interval 733–817 (AEEGVLDGKT…LLKKPAGDQA (85 aa)).

This sequence belongs to the NAD-dependent DNA ligase family. LigA subfamily. It depends on Mg(2+) as a cofactor. Mn(2+) is required as a cofactor.

It carries out the reaction NAD(+) + (deoxyribonucleotide)n-3'-hydroxyl + 5'-phospho-(deoxyribonucleotide)m = (deoxyribonucleotide)n+m + AMP + beta-nicotinamide D-nucleotide.. Its function is as follows. DNA ligase that catalyzes the formation of phosphodiester linkages between 5'-phosphoryl and 3'-hydroxyl groups in double-stranded DNA using NAD as a coenzyme and as the energy source for the reaction. It is essential for DNA replication and repair of damaged DNA. The chain is DNA ligase from Ralstonia pickettii (strain 12J).